The sequence spans 409 residues: Gamma-glutamyl phosphate reductase (409 aa).

This sequence belongs to the gamma-glutamyl phosphate reductase family.

The protein resides in the cytoplasm. It carries out the reaction L-glutamate 5-semialdehyde + phosphate + NADP(+) = L-glutamyl 5-phosphate + NADPH + H(+). It functions in the pathway amino-acid biosynthesis; L-proline biosynthesis; L-glutamate 5-semialdehyde from L-glutamate: step 2/2. Catalyzes the NADPH-dependent reduction of L-glutamate 5-phosphate into L-glutamate 5-semialdehyde and phosphate. The product spontaneously undergoes cyclization to form 1-pyrroline-5-carboxylate. In Bartonella tribocorum (strain CIP 105476 / IBS 506), this protein is Gamma-glutamyl phosphate reductase.